The chain runs to 147 residues: Mitochondrial import receptor subunit TOM20 homolog (147 aa).

Topologically, residues Met-1 to Val-3 are mitochondrial intermembrane. The helical transmembrane segment at Val-4–Phe-26 threads the bilayer. Over Asp-27–Glu-147 the chain is Cytoplasmic.

The protein belongs to the Tom20 family. Forms part of the preprotein translocase complex of the outer mitochondrial membrane (TOM complex). Interacts with tom22.

The protein resides in the mitochondrion outer membrane. In terms of biological role, central component of the receptor complex responsible for the recognition and translocation of cytosolically synthesized mitochondrial preproteins. Together with tom22 functions as the transit peptide receptor at the surface of the mitochondrion outer membrane and facilitates the movement of preproteins into the tom40 translocation pore. The chain is Mitochondrial import receptor subunit TOM20 homolog (tomm20) from Xenopus tropicalis (Western clawed frog).